The chain runs to 195 residues: Peptidyl-tRNA hydrolase (195 aa).

TRNA is bound at residue Y17. H22 acts as the Proton acceptor in catalysis. Positions 68, 70, and 116 each coordinate tRNA.

It belongs to the PTH family. Monomer.

Its subcellular location is the cytoplasm. The catalysed reaction is an N-acyl-L-alpha-aminoacyl-tRNA + H2O = an N-acyl-L-amino acid + a tRNA + H(+). Its function is as follows. Hydrolyzes ribosome-free peptidyl-tRNAs (with 1 or more amino acids incorporated), which drop off the ribosome during protein synthesis, or as a result of ribosome stalling. Functionally, catalyzes the release of premature peptidyl moieties from peptidyl-tRNA molecules trapped in stalled 50S ribosomal subunits, and thus maintains levels of free tRNAs and 50S ribosomes. This is Peptidyl-tRNA hydrolase from Shewanella loihica (strain ATCC BAA-1088 / PV-4).